Reading from the N-terminus, the 174-residue chain is NADH-quinone oxidoreductase subunit B 2 (174 aa).

Positions 38, 39, 104, and 133 each coordinate [4Fe-4S] cluster.

The protein belongs to the complex I 20 kDa subunit family. NDH-1 is composed of 14 different subunits. Subunits NuoB, C, D, E, F, and G constitute the peripheral sector of the complex. [4Fe-4S] cluster is required as a cofactor.

The protein resides in the cell membrane. It catalyses the reaction a quinone + NADH + 5 H(+)(in) = a quinol + NAD(+) + 4 H(+)(out). Functionally, NDH-1 shuttles electrons from NADH, via FMN and iron-sulfur (Fe-S) centers, to quinones in the respiratory chain. The immediate electron acceptor for the enzyme in this species is believed to be ubiquinone. Couples the redox reaction to proton translocation (for every two electrons transferred, four hydrogen ions are translocated across the cytoplasmic membrane), and thus conserves the redox energy in a proton gradient. The protein is NADH-quinone oxidoreductase subunit B 2 of Chloroflexus aurantiacus (strain ATCC 29366 / DSM 635 / J-10-fl).